A 383-amino-acid polypeptide reads, in one-letter code: S-adenosylmethionine synthase (383 aa).

Position 22 (H22) interacts with ATP. D24 contacts Mg(2+). K(+) is bound at residue E50. L-methionine contacts are provided by E63 and Q99. The tract at residues Q99–S109 is flexible loop. ATP contacts are provided by residues D160–K162, D235, R241–K242, S258, and K262. D235 is an L-methionine binding site. K266 serves as a coordination point for L-methionine.

This sequence belongs to the AdoMet synthase family. As to quaternary structure, homotetramer; dimer of dimers. Requires Mg(2+) as cofactor. The cofactor is K(+).

The protein localises to the cytoplasm. It carries out the reaction L-methionine + ATP + H2O = S-adenosyl-L-methionine + phosphate + diphosphate. It participates in amino-acid biosynthesis; S-adenosyl-L-methionine biosynthesis; S-adenosyl-L-methionine from L-methionine: step 1/1. In terms of biological role, catalyzes the formation of S-adenosylmethionine (AdoMet) from methionine and ATP. The overall synthetic reaction is composed of two sequential steps, AdoMet formation and the subsequent tripolyphosphate hydrolysis which occurs prior to release of AdoMet from the enzyme. The sequence is that of S-adenosylmethionine synthase from Mycoplasma pneumoniae (strain ATCC 29342 / M129 / Subtype 1) (Mycoplasmoides pneumoniae).